A 167-amino-acid chain; its full sequence is MSRTLDLILLCRLVQDTAHLLMRITLQWDINEMSYFYSASTNGFYSTEFHGTNIPDDAVEISESEWETLINSQGVTKMITCGENGHPVIVDRPSPTPERLALINDEKKSALIAEATNVIAPLQDAVDLGMATDDETKLLLAWEKYRVLLMRVDIKNTEWPKKPEGNK.

Belongs to the tfa family.

In terms of biological role, chaperone involved in tail fiber assembly. The sequence is that of Probable tail fiber assembly protein (22) from Shigella phage SfV (Shigella flexneri bacteriophage V).